Reading from the N-terminus, the 420-residue chain is Transcriptional adapter 2-beta (420 aa).

The ZZ-type zinc-finger motif lies at 4–59; it reads LGKKYCVYCLAEVSPLRFRCTECQDIELCPECFSAGAEIGHHRRYHGYQLVDGGRF. Residues cysteine 9, cysteine 12, cysteine 23, cysteine 26, cysteine 32, cysteine 35, histidine 45, and histidine 49 each coordinate Zn(2+). Residues 65 to 118 enclose the SANT domain; it reads EAEGGWTSREEQLLLDAIEQFGFGNWEDMAAHVGASRTPQEVMEHYVSMYIHGN. Residues 305-335 are disordered; the sequence is SAEYEAARHKREKRKENKNLAGSKRGKEDGK.

As to quaternary structure, interacts with GCN5L2, SMARCA4, SMARCE1 and PAX5. Component of the TFTC-HAT complex.

Its subcellular location is the nucleus. Coactivates PAX5-dependent transcription together with either SMARCA4 or GCN5L2. This is Transcriptional adapter 2-beta (TADA2B) from Homo sapiens (Human).